We begin with the raw amino-acid sequence, 235 residues long: Large ribosomal subunit protein uL3 (235 aa).

A disordered region spans residues 150–189; it reads AGGPASHGSGHHRHAGSTGMRSTPGRGLPGGKKAGQMGNE.

The protein belongs to the universal ribosomal protein uL3 family. In terms of assembly, part of the 50S ribosomal subunit. Forms a cluster with proteins L14 and L19.

Its function is as follows. One of the primary rRNA binding proteins, it binds directly near the 3'-end of the 23S rRNA, where it nucleates assembly of the 50S subunit. This Protochlamydia amoebophila (strain UWE25) protein is Large ribosomal subunit protein uL3.